A 113-amino-acid polypeptide reads, in one-letter code: Phosphorelay protein LuxU (113 aa).

Positions 18-113 constitute an HPt domain; it reads GEENVPILVN…THQCYSDLVH (96 aa). Histidine 57 carries the phosphohistidine modification.

As to quaternary structure, monomer.

In terms of biological role, phosphorelay protein which receives sensory signals from a sensory kinase and transmit them to LuxO. At low cell density, a phosphoryl group is transferred from the sensory kinase, probably on His-57 and this phosphoryl group is further transferred to LuxO. In Vibrio cholerae serotype O1 (strain ATCC 39315 / El Tor Inaba N16961), this protein is Phosphorelay protein LuxU (luxU).